The chain runs to 65 residues: Large ribosomal subunit protein bL35 (65 aa).

The interval 1-22 (MPKIKTLRSAAKRFKKTASGKF) is disordered. The segment covering 10 to 22 (AAKRFKKTASGKF) has biased composition (basic residues).

Belongs to the bacterial ribosomal protein bL35 family.

This is Large ribosomal subunit protein bL35 from Buchnera aphidicola subsp. Schizaphis graminum (strain Sg).